Consider the following 182-residue polypeptide: Ribosome-recycling factor (182 aa).

The protein belongs to the RRF family.

Its subcellular location is the cytoplasm. Its function is as follows. Responsible for the release of ribosomes from messenger RNA at the termination of protein biosynthesis. May increase the efficiency of translation by recycling ribosomes from one round of translation to another. The chain is Ribosome-recycling factor from Synechocystis sp. (strain ATCC 27184 / PCC 6803 / Kazusa).